Consider the following 466-residue polypeptide: Putative D-3-phosphoglycerate dehydrogenase (466 aa).

The span at 1–15 shows a compositional bias: basic and acidic residues; that stretch reads MDIKGGRRGNVEDSL. Residues 1–26 form a disordered region; sequence MDIKGGRRGNVEDSLNKLSLSPPDNN. Residues 16 to 26 show a composition bias toward polar residues; the sequence is NKLSLSPPDNN. Position 87 is a phosphoserine (Ser-87). Residues 205-206 and Asp-225 each bind NAD(+); that span reads HI. Ser-258 is subject to Phosphoserine. NAD(+)-binding positions include 282–284 and Asp-308; that span reads ASR. Arg-284 is a catalytic residue. Glu-313 is a catalytic residue. His-344 functions as the Proton donor in the catalytic mechanism. 344 to 347 provides a ligand contact to NAD(+); it reads HIGG. The 71-residue stretch at 396 to 466 folds into the ACT domain; the sequence is RVLFVHRNVP…PCKINTRLLY (71 aa).

The protein belongs to the D-isomer specific 2-hydroxyacid dehydrogenase family.

It catalyses the reaction (2R)-3-phosphoglycerate + NAD(+) = 3-phosphooxypyruvate + NADH + H(+). The enzyme catalyses (R)-2-hydroxyglutarate + NAD(+) = 2-oxoglutarate + NADH + H(+). The protein operates within amino-acid biosynthesis; L-serine biosynthesis; L-serine from 3-phospho-D-glycerate: step 1/3. Functionally, catalyzes the reversible oxidation of 3-phospho-D-glycerate to 3-phosphonooxypyruvate, the first step of the phosphorylated L-serine biosynthesis pathway. Also catalyzes the reversible oxidation of 2-hydroxyglutarate to 2-oxoglutarate. The protein is Putative D-3-phosphoglycerate dehydrogenase of Schizosaccharomyces pombe (strain 972 / ATCC 24843) (Fission yeast).